Reading from the N-terminus, the 188-residue chain is Peptidyl-tRNA hydrolase (188 aa).

TRNA is bound at residue Phe14. Catalysis depends on His19, which acts as the Proton acceptor. Residues Tyr64, Asn66, and Asn112 each contribute to the tRNA site.

Belongs to the PTH family. As to quaternary structure, monomer.

The protein resides in the cytoplasm. It catalyses the reaction an N-acyl-L-alpha-aminoacyl-tRNA + H2O = an N-acyl-L-amino acid + a tRNA + H(+). In terms of biological role, hydrolyzes ribosome-free peptidyl-tRNAs (with 1 or more amino acids incorporated), which drop off the ribosome during protein synthesis, or as a result of ribosome stalling. Its function is as follows. Catalyzes the release of premature peptidyl moieties from peptidyl-tRNA molecules trapped in stalled 50S ribosomal subunits, and thus maintains levels of free tRNAs and 50S ribosomes. The protein is Peptidyl-tRNA hydrolase of Aster yellows witches'-broom phytoplasma (strain AYWB).